The sequence spans 177 residues: Large ribosomal subunit protein uL6 (177 aa).

It belongs to the universal ribosomal protein uL6 family. As to quaternary structure, part of the 50S ribosomal subunit.

In terms of biological role, this protein binds to the 23S rRNA, and is important in its secondary structure. It is located near the subunit interface in the base of the L7/L12 stalk, and near the tRNA binding site of the peptidyltransferase center. The polypeptide is Large ribosomal subunit protein uL6 (Rickettsia africae (strain ESF-5)).